The chain runs to 433 residues: Succinate--CoA ligase [ADP-forming] subunit beta, mitochondrial (433 aa).

The transit peptide at 1–23 (MLTRSVLRKAPRAFSPFLQKRNL) directs the protein to the mitochondrion. In terms of domain architecture, ATP-grasp spans 31-273 (HDILRKFGVD…ISQEDPDEAR (243 aa)). Residues Lys68, 75–77 (GRG), and Glu136 each bind ATP. Positions 228 and 242 each coordinate Mg(2+). Substrate contacts are provided by residues Asn293 and 350–352 (GIV).

It belongs to the succinate/malate CoA ligase beta subunit family. Heterodimer of an alpha and a beta subunit. Mg(2+) is required as a cofactor.

Its subcellular location is the mitochondrion. It carries out the reaction succinate + ATP + CoA = succinyl-CoA + ADP + phosphate. It participates in carbohydrate metabolism; tricarboxylic acid cycle; succinate from succinyl-CoA (ligase route): step 1/1. Succinyl-CoA synthetase functions in the citric acid cycle (TCA), coupling the hydrolysis of succinyl-CoA to the synthesis of ATP and thus represents the only step of substrate-level phosphorylation in the TCA. The beta subunit provides nucleotide specificity of the enzyme and binds the substrate succinate, while the binding sites for coenzyme A and phosphate are found in the alpha subunit. The protein is Succinate--CoA ligase [ADP-forming] subunit beta, mitochondrial of Schizosaccharomyces pombe (strain 972 / ATCC 24843) (Fission yeast).